The chain runs to 342 residues: GTPase Obg (342 aa).

The Obg domain maps to 1-159; it reads MKFIDEAKIY…RWIRLELKLL (159 aa). Positions 160–332 constitute an OBG-type G domain; the sequence is ADVGIIGLPN…LLYKIGEALK (173 aa). Residues 166–173, 191–195, 214–217, 284–287, and 313–315 each bind GTP; these read GLPNVGKS, FTTLT, DIPG, NKTD, and SAA. Residues S173 and T193 each contribute to the Mg(2+) site.

This sequence belongs to the TRAFAC class OBG-HflX-like GTPase superfamily. OBG GTPase family. As to quaternary structure, monomer. It depends on Mg(2+) as a cofactor.

Its subcellular location is the cytoplasm. Its function is as follows. An essential GTPase which binds GTP, GDP and possibly (p)ppGpp with moderate affinity, with high nucleotide exchange rates and a fairly low GTP hydrolysis rate. Plays a role in control of the cell cycle, stress response, ribosome biogenesis and in those bacteria that undergo differentiation, in morphogenesis control. The polypeptide is GTPase Obg (Syntrophus aciditrophicus (strain SB)).